The chain runs to 504 residues: Maturase K (504 aa).

Belongs to the intron maturase 2 family. MatK subfamily.

The protein resides in the plastid. It is found in the chloroplast. In terms of biological role, usually encoded in the trnK tRNA gene intron. Probably assists in splicing its own and other chloroplast group II introns. In Quercus rubra (Northern red oak), this protein is Maturase K.